The sequence spans 691 residues: Alpha-1,4-glucan:maltose-1-phosphate maltosyltransferase (691 aa).

Alpha-maltose 1-phosphate is bound by residues Lys280, Gln341, and Asp376. Asp411 functions as the Nucleophile in the catalytic mechanism. Asn412 is an alpha-maltose 1-phosphate binding site. Glu440 functions as the Proton donor in the catalytic mechanism. 550 to 551 lines the alpha-maltose 1-phosphate pocket; the sequence is KY.

Belongs to the glycosyl hydrolase 13 family. GlgE subfamily. In terms of assembly, homodimer.

The catalysed reaction is alpha-maltose 1-phosphate + [(1-&gt;4)-alpha-D-glucosyl](n) = [(1-&gt;4)-alpha-D-glucosyl](n+2) + phosphate. Its function is as follows. Maltosyltransferase that uses maltose 1-phosphate (M1P) as the sugar donor to elongate linear or branched alpha-(1-&gt;4)-glucans. Is involved in a branched alpha-glucan biosynthetic pathway from trehalose, together with TreS, Mak and GlgB. The chain is Alpha-1,4-glucan:maltose-1-phosphate maltosyltransferase from Arcanobacterium haemolyticum (strain ATCC 9345 / DSM 20595 / CCM 5947 / CCUG 17215 / LMG 16163 / NBRC 15585 / NCTC 8452 / 11018).